A 329-amino-acid chain; its full sequence is Cytosolic arginine sensor for mTORC1 subunit 2 (329 aa).

2 consecutive ACT domains span residues 72–140 (ADAT…HTLS) and 262–322 (ELWK…SALK).

Belongs to the GATS family. Forms homodimers and heterodimers with CASTOR1. Interacts with the GATOR2 complex which is composed of MIOS, SEC13, SEH1L, WDR24 and WDR59; the interaction is not regulated by arginine. Widely expressed.

The protein localises to the cytoplasm. The protein resides in the cytosol. Its function is as follows. Functions as a negative regulator of the TORC1 signaling pathway through the GATOR complex. As part of homodimers or heterodimers with CASTOR1, directly binds and inhibits the GATOR subcomplex GATOR2 and thereby mTORC1. Does not directly bind arginine, but binding of arginine to CASTOR1 disrupts the interaction of CASTOR2-containing heterodimers with GATOR2 which can in turn activate mTORC1 and the TORC1 signaling pathway. This Homo sapiens (Human) protein is Cytosolic arginine sensor for mTORC1 subunit 2.